The sequence spans 223 residues: Chorismate dehydratase (223 aa).

The protein belongs to the MqnA/MqnD family. MqnA subfamily.

The catalysed reaction is chorismate = 3-[(1-carboxyvinyl)-oxy]benzoate + H2O. The protein operates within quinol/quinone metabolism; menaquinone biosynthesis. Its function is as follows. Catalyzes the dehydration of chorismate into 3-[(1-carboxyvinyl)oxy]benzoate, a step in the biosynthesis of menaquinone (MK, vitamin K2). The sequence is that of Chorismate dehydratase from Campylobacter jejuni subsp. jejuni serotype O:23/36 (strain 81-176).